The following is a 160-amino-acid chain: Lymphocyte antigen 96 (160 aa).

An N-terminal signal peptide occupies residues methionine 1 to threonine 16. 3 cysteine pairs are disulfide-bonded: cysteine 25-cysteine 51, cysteine 37-cysteine 148, and cysteine 95-cysteine 105. Residue asparagine 26 is glycosylated (N-linked (GlcNAc...) asparagine). Asparagine 114 carries an N-linked (GlcNAc...) asparagine glycan. The interaction with lipopolysaccharide stretch occupies residues phenylalanine 119 to glycine 123. Asparagine 150 carries N-linked (GlcNAc...) asparagine glycosylation.

As to quaternary structure, heterogeneous homomer formed from homodimers; disulfide-linked. Belongs to the lipopolysaccharide (LPS) receptor, a multi-protein complex containing at least CD14, LY96 and TLR4. Binds to the extracellular domains of TLR2 and TLR4. Ligand binding induces interaction with TLR4 and oligomerization of the complex. Post-translationally, N-glycosylated.

Its subcellular location is the secreted. It localises to the extracellular space. Functionally, binds bacterial lipopolysaccharide (LPS). Cooperates with TLR4 in the innate immune response to bacterial lipopolysaccharide (LPS), and with TLR2 in the response to cell wall components from Gram-positive and Gram-negative bacteria. Enhances TLR4-dependent activation of NF-kappa-B. Cells expressing both LY96 and TLR4, but not TLR4 alone, respond to LPS. In Bos taurus (Bovine), this protein is Lymphocyte antigen 96 (LY96).